The following is a 360-amino-acid chain: UDP-N-acetylglucosamine--N-acetylmuramyl-(pentapeptide) pyrophosphoryl-undecaprenol N-acetylglucosamine transferase (360 aa).

Residues 11–13, Asn-117, Arg-160, Ser-192, and Gln-294 each bind UDP-N-acetyl-alpha-D-glucosamine; that span reads TGG.

It belongs to the glycosyltransferase 28 family. MurG subfamily.

The protein localises to the cell inner membrane. It catalyses the reaction di-trans,octa-cis-undecaprenyl diphospho-N-acetyl-alpha-D-muramoyl-L-alanyl-D-glutamyl-meso-2,6-diaminopimeloyl-D-alanyl-D-alanine + UDP-N-acetyl-alpha-D-glucosamine = di-trans,octa-cis-undecaprenyl diphospho-[N-acetyl-alpha-D-glucosaminyl-(1-&gt;4)]-N-acetyl-alpha-D-muramoyl-L-alanyl-D-glutamyl-meso-2,6-diaminopimeloyl-D-alanyl-D-alanine + UDP + H(+). Its pathway is cell wall biogenesis; peptidoglycan biosynthesis. Cell wall formation. Catalyzes the transfer of a GlcNAc subunit on undecaprenyl-pyrophosphoryl-MurNAc-pentapeptide (lipid intermediate I) to form undecaprenyl-pyrophosphoryl-MurNAc-(pentapeptide)GlcNAc (lipid intermediate II). The protein is UDP-N-acetylglucosamine--N-acetylmuramyl-(pentapeptide) pyrophosphoryl-undecaprenol N-acetylglucosamine transferase of Rickettsia felis (strain ATCC VR-1525 / URRWXCal2) (Rickettsia azadi).